A 436-amino-acid chain; its full sequence is Methyl-accepting chemotaxis protein Amb0994 (436 aa).

At 1-8 (METTLGSY) the chain is on the cytoplasmic side. Residues 9–29 (ARTLSLGMLVPSAICLLAGTF) form a helical membrane-spanning segment. Residue Gly30 is a topological domain, periplasmic. The helical transmembrane segment at 31 to 51 (LLGGSSIALWVVIAVSLLGVV) threads the bilayer. Topologically, residues 52 to 436 (GGVKIGGSAR…DGFIARIGGR (385 aa)) are cytoplasmic. Residues 180–416 (AATELEASSG…QVADAASELS (237 aa)) form the Methyl-accepting transducer domain. Gln211 is modified (glutamate methyl ester (Gln)). Glutamate methyl ester (Glu) is present on Glu225. Residues 321–436 (TEDITSQVAH…DGFIARIGGR (116 aa)) are required for interaction with MamK and to respond to the magnetic field.

It belongs to the methyl-accepting chemotaxis (MCP) protein family. As to quaternary structure, interacts with MamK at cell poles and septa.

It is found in the cell inner membrane. Functionally, probable methyl-accepting taxis protein. May be the receptor that senses the torque generated from the interaction between the magnetosome dipole moment and the external magnetic field. Overproduction interferes with magnetotaxis, cells respond more slowly to changes in the magnetic field; requires the MamK-interacting C-terminus of the protein. The effect of magnetic sensing is to control flagellar rotation. Its function is as follows. Chemotactic-signal transducers respond to changes in the concentration of attractants and repellents in the environment, transduce a signal from the outside to the inside of the cell, and facilitate sensory adaptation through variation of methylation levels. Attractants increase the level of methylation while repellents decrease the level of methylation. In Paramagnetospirillum magneticum (strain ATCC 700264 / AMB-1) (Magnetospirillum magneticum), this protein is Methyl-accepting chemotaxis protein Amb0994.